The chain runs to 731 residues: Unconventional prefoldin RPB5 interactor-like protein (731 aa).

Coiled-coil stretches lie at residues 91 to 115 and 143 to 176; these read RLKL…KLHT and LAEH…LRKL. Positions 205–217 are enriched in polar residues; sequence PLKSTNESSPKSL. 3 disordered regions span residues 205–224, 259–302, and 370–396; these read PLKS…EEDE, MSGE…EEEV, and ASEE…TVSE. A coiled-coil region spans residues 220 to 258; that stretch reads EEEDELWKKLEAEEQNEADELSSEAEESLKTTDNLVRQL. Acidic residues predominate over residues 285 to 300; it reads ISEDDGDDDDEGDQEE. 2 coiled-coil regions span residues 357–379 and 452–477; these read DDLQ…EVVE and SIKT…VKEN. 2 stretches are compositionally biased toward polar residues: residues 508-518 and 575-599; these read GAIPSPSSDQS and SQFS…TSND. Disordered stretches follow at residues 508–527, 567–682, and 694–731; these read GAIP…KPSD, GSAY…DLRD, and VEKE…LNKT. A compositionally biased stretch (basic and acidic residues) spans 611–621; it reads FYEKYEKDRAK. Positions 623-644 are enriched in polar residues; the sequence is SKSNSSEGDATDPESATKSILR. Positions 661–673 are enriched in basic residues; that stretch reads KKGRKVRNQKKKE. Over residues 721–731 the composition is skewed to basic and acidic residues; sequence RFKEQRALNKT.

Belongs to the RNA polymerase II subunit 5-mediating protein family. As to quaternary structure, interacts with serine/threonine-protein phosphatases flw/PP1beta9C and Pp1-87B with higher affinity for Pp1-87B.

It localises to the cytoplasm. Its subcellular location is the chromosome. The protein resides in the nucleus. Inhibits the activity of serine/threonine-protein phosphatases flw/PP1beta9C and Pp1-87B. Required for germ line cell viability and differentiation, normal transcriptional activity and maintenance of DNA integrity. This Drosophila melanogaster (Fruit fly) protein is Unconventional prefoldin RPB5 interactor-like protein.